The following is a 57-amino-acid chain: Small ribosomal subunit protein bS21 (57 aa).

The protein belongs to the bacterial ribosomal protein bS21 family.

The chain is Small ribosomal subunit protein bS21 from Bacillus anthracis (strain A0248).